The primary structure comprises 113 residues: Urocortin-2 (113 aa).

A signal peptide spans 1-23 (MMTRWALVVFVVLMLDRILFVPG). A propeptide spanning residues 24-71 (TPIPTFQLLPQNSLETTPSSVTSESSSGTTTGPSASWSNSKASPYLDT) is cleaved from the precursor. The segment covering 37–61 (LETTPSSVTSESSSGTTTGPSASWS) has biased composition (low complexity). Residues 37–64 (LETTPSSVTSESSSGTTTGPSASWSNSK) are disordered. Valine 110 is subject to Valine amide; partial.

Belongs to the sauvagine/corticotropin-releasing factor/urotensin I family. Binds with high affinity to CRF receptors 2-alpha and 2-beta. Glycosylated.

The protein localises to the secreted. In terms of biological role, suppresses food intake, delays gastric emptying and decreases heat-induced edema. Might represent an endogenous ligand for maintaining homeostasis after stress. The protein is Urocortin-2 (Ucn2) of Mus musculus (Mouse).